The primary structure comprises 971 residues: Exportin-2 (971 aa).

An Importin N-terminal domain is found at 29–102 (AEKFLESVEG…KANIVNLMLS (74 aa)).

The protein belongs to the XPO2/CSE1 family. Interacts with cftr.

Its subcellular location is the cytoplasm. It localises to the nucleus. Export receptor for importin alpha. Mediates importin-alpha re-export from the nucleus to the cytoplasm after import substrates have been released into the nucleoplasm. Negatively regulates fluid secretion and plays a role in fluid homeostasis by down-regulating cftr activity. The sequence is that of Exportin-2 (cse1l) from Pagrus major (Red sea bream).